A 401-amino-acid chain; its full sequence is Acetate kinase (401 aa).

Mg(2+) is bound at residue N7. K14 lines the ATP pocket. R91 contributes to the substrate binding site. The active-site Proton donor/acceptor is D148. ATP-binding positions include 208 to 212 (HLGNG), 283 to 285 (DFR), and 332 to 336 (GVGEN). E385 contributes to the Mg(2+) binding site.

Belongs to the acetokinase family. In terms of assembly, homodimer. The cofactor is Mg(2+). Mn(2+) is required as a cofactor.

The protein localises to the cytoplasm. It catalyses the reaction acetate + ATP = acetyl phosphate + ADP. It functions in the pathway metabolic intermediate biosynthesis; acetyl-CoA biosynthesis; acetyl-CoA from acetate: step 1/2. Functionally, catalyzes the formation of acetyl phosphate from acetate and ATP. Can also catalyze the reverse reaction. This chain is Acetate kinase, found in Thermoanaerobacter pseudethanolicus (strain ATCC 33223 / 39E) (Clostridium thermohydrosulfuricum).